Here is a 255-residue protein sequence, read N- to C-terminus: uncharacterized protein (255 aa).

The N-terminal stretch at 1–23 is a signal peptide; it reads MKRLNKLVLGISFLFLVISITAG. Cys-24 carries the N-palmitoyl cysteine lipid modification. A lipid anchor (S-diacylglycerol cysteine) is attached at Cys-24.

Belongs to the staphylococcal tandem lipoprotein family.

The protein localises to the cell membrane. This is an uncharacterized protein from Staphylococcus aureus (strain N315).